Consider the following 46-residue polypeptide: Large ribosomal subunit protein bL36 (46 aa).

Belongs to the bacterial ribosomal protein bL36 family.

In Klebsiella pneumoniae (strain 342), this protein is Large ribosomal subunit protein bL36.